We begin with the raw amino-acid sequence, 34 residues long: Tryptophanase operon leader peptide (34 aa).

This is Tryptophanase operon leader peptide (tnaL) from Proteus vulgaris.